A 193-amino-acid chain; its full sequence is HMG-Y-related protein A (193 aa).

The H15 domain occupies proline 11 to alanine 81. The segment at asparagine 75–alanine 193 is disordered. A Nuclear localization signal 1 (NLS) motif is present at residues proline 86–arginine 92. DNA-binding regions (a.T hook) lie at residues lysine 87–aspartate 98, glycine 113–serine 124, proline 138–lysine 149, and lysine 173–proline 184. Residues proline 145–lysine 149 carry the Nuclear localization signal 2 (NLS) motif.

It belongs to the histone H1/H5 family. Post-translationally, phosphorylated by CDK, this phosphorylation prevents DNA-binding. Motility is increased when hypophosphorylated. In terms of processing, acetylated.

It localises to the nucleus. It is found in the nucleolus. Functionally, binds A/T-rich DNA (e.g. present in the storage gamma-zein gene promoter) with a highly dynamic distribution into the nucleus. Probably involved in endosperm development, during cells shift from a mitotic cycle to endoreduplication leading to massive synthesis of storage proteins (zeins) and starch. This is HMG-Y-related protein A from Zea mays (Maize).